Reading from the N-terminus, the 347-residue chain is Ketol-acid reductoisomerase (NADP(+)) (347 aa).

Positions 1–185 (MKIYYDEDAN…GGTRAGVLET (185 aa)) constitute a KARI N-terminal Rossmann domain. NADP(+) is bound by residues 24-27 (YGSQ), Arg-47, Ser-50, Ser-52, and 82-85 (DEFQ). The active site involves His-107. Gly-133 is an NADP(+) binding site. Positions 186-336 (SFKEETETDL…AELRSKMKFL (151 aa)) constitute a KARI C-terminal knotted domain. Asp-194, Glu-198, Glu-230, and Glu-234 together coordinate Mg(2+). Residue Ser-255 coordinates substrate.

It belongs to the ketol-acid reductoisomerase family. The cofactor is Mg(2+).

The catalysed reaction is (2R)-2,3-dihydroxy-3-methylbutanoate + NADP(+) = (2S)-2-acetolactate + NADPH + H(+). It catalyses the reaction (2R,3R)-2,3-dihydroxy-3-methylpentanoate + NADP(+) = (S)-2-ethyl-2-hydroxy-3-oxobutanoate + NADPH + H(+). It participates in amino-acid biosynthesis; L-isoleucine biosynthesis; L-isoleucine from 2-oxobutanoate: step 2/4. The protein operates within amino-acid biosynthesis; L-valine biosynthesis; L-valine from pyruvate: step 2/4. Involved in the biosynthesis of branched-chain amino acids (BCAA). Catalyzes an alkyl-migration followed by a ketol-acid reduction of (S)-2-acetolactate (S2AL) to yield (R)-2,3-dihydroxy-isovalerate. In the isomerase reaction, S2AL is rearranged via a Mg-dependent methyl migration to produce 3-hydroxy-3-methyl-2-ketobutyrate (HMKB). In the reductase reaction, this 2-ketoacid undergoes a metal-dependent reduction by NADPH to yield (R)-2,3-dihydroxy-isovalerate. This is Ketol-acid reductoisomerase (NADP(+)) from Gamma-proteobacterium EBAC31A08.